We begin with the raw amino-acid sequence, 143 residues long: Holo-[acyl-carrier-protein] synthase (143 aa).

Residues Asp-9 and Glu-63 each coordinate Mg(2+).

It belongs to the P-Pant transferase superfamily. AcpS family. Mg(2+) serves as cofactor.

Its subcellular location is the cytoplasm. The enzyme catalyses apo-[ACP] + CoA = holo-[ACP] + adenosine 3',5'-bisphosphate + H(+). In terms of biological role, transfers the 4'-phosphopantetheine moiety from coenzyme A to a Ser of acyl-carrier-protein. In Burkholderia pseudomallei (strain 1106a), this protein is Holo-[acyl-carrier-protein] synthase.